A 458-amino-acid chain; its full sequence is UDP-N-acetylglucosamine 1-carboxyvinyltransferase (458 aa).

34 to 35 (KN) provides a ligand contact to phosphoenolpyruvate. A UDP-N-acetyl-alpha-D-glucosamine-binding site is contributed by R104. The active-site Proton donor is C128. Position 128 is a 2-(S-cysteinyl)pyruvic acid O-phosphothioketal (C128). Residues D319 and I341 each contribute to the UDP-N-acetyl-alpha-D-glucosamine site.

The protein belongs to the EPSP synthase family. MurA subfamily.

The protein resides in the cytoplasm. It carries out the reaction phosphoenolpyruvate + UDP-N-acetyl-alpha-D-glucosamine = UDP-N-acetyl-3-O-(1-carboxyvinyl)-alpha-D-glucosamine + phosphate. Its pathway is cell wall biogenesis; peptidoglycan biosynthesis. Cell wall formation. Adds enolpyruvyl to UDP-N-acetylglucosamine. This is UDP-N-acetylglucosamine 1-carboxyvinyltransferase from Prochlorococcus marinus (strain MIT 9515).